Consider the following 442-residue polypeptide: Histidine--tRNA ligase (442 aa).

The protein belongs to the class-II aminoacyl-tRNA synthetase family. As to quaternary structure, homodimer.

The protein localises to the cytoplasm. The catalysed reaction is tRNA(His) + L-histidine + ATP = L-histidyl-tRNA(His) + AMP + diphosphate + H(+). This is Histidine--tRNA ligase (hisS) from Helicobacter pylori (strain ATCC 700392 / 26695) (Campylobacter pylori).